Consider the following 243-residue polypeptide: 1-(5-phosphoribosyl)-5-[(5-phosphoribosylamino)methylideneamino] imidazole-4-carboxamide isomerase (243 aa).

Residue aspartate 8 is the Proton acceptor of the active site. Aspartate 128 (proton donor) is an active-site residue.

It belongs to the HisA/HisF family.

It is found in the cytoplasm. The enzyme catalyses 1-(5-phospho-beta-D-ribosyl)-5-[(5-phospho-beta-D-ribosylamino)methylideneamino]imidazole-4-carboxamide = 5-[(5-phospho-1-deoxy-D-ribulos-1-ylimino)methylamino]-1-(5-phospho-beta-D-ribosyl)imidazole-4-carboxamide. It functions in the pathway amino-acid biosynthesis; L-histidine biosynthesis; L-histidine from 5-phospho-alpha-D-ribose 1-diphosphate: step 4/9. In Opitutus terrae (strain DSM 11246 / JCM 15787 / PB90-1), this protein is 1-(5-phosphoribosyl)-5-[(5-phosphoribosylamino)methylideneamino] imidazole-4-carboxamide isomerase.